The chain runs to 213 residues: 5-oxoprolinase subunit B (213 aa).

Belongs to the PxpB family. Forms a complex composed of PxpA, PxpB and PxpC.

The catalysed reaction is 5-oxo-L-proline + ATP + 2 H2O = L-glutamate + ADP + phosphate + H(+). Its function is as follows. Catalyzes the cleavage of 5-oxoproline to form L-glutamate coupled to the hydrolysis of ATP to ADP and inorganic phosphate. This Haemophilus influenzae (strain ATCC 51907 / DSM 11121 / KW20 / Rd) protein is 5-oxoprolinase subunit B.